Here is an 85-residue protein sequence, read N- to C-terminus: Large ribosomal subunit protein bL27 (85 aa).

The segment at 1 to 21 (MAHKKAGGSSRNGRDSEGRRL) is disordered.

This sequence belongs to the bacterial ribosomal protein bL27 family.

The protein is Large ribosomal subunit protein bL27 of Rhodospirillum rubrum (strain ATCC 11170 / ATH 1.1.1 / DSM 467 / LMG 4362 / NCIMB 8255 / S1).